A 135-amino-acid polypeptide reads, in one-letter code: Ribonuclease VapC35 (135 aa).

The PINc domain maps to 2–123; that stretch reads IYLETSALVK…DNRLKEAAEA (122 aa). Glu5 and Asp91 together coordinate Mg(2+).

Belongs to the PINc/VapC protein family. The cofactor is Mg(2+).

Its function is as follows. Toxic component of a type II toxin-antitoxin (TA) system. An RNase. Its toxic effect is neutralized by coexpression with cognate antitoxin VapB35. This Mycobacterium tuberculosis (strain CDC 1551 / Oshkosh) protein is Ribonuclease VapC35.